Reading from the N-terminus, the 577-residue chain is Methionine--tRNA ligase, mitochondrial (577 aa).

Positions 25 to 37 (PIFYVNAAPHIGH) match the 'HIGH' region motif. The 'KMSKS' region motif lies at 329 to 333 (KMSKS). Lysine 332 contributes to the ATP binding site.

It belongs to the class-I aminoacyl-tRNA synthetase family.

The protein localises to the mitochondrion matrix. The catalysed reaction is tRNA(Met) + L-methionine + ATP = L-methionyl-tRNA(Met) + AMP + diphosphate. The chain is Methionine--tRNA ligase, mitochondrial (MSM1) from Candida albicans (Yeast).